The chain runs to 508 residues: MGLPWYRVHTVVLNDPGRLLSVHIMHTALVAGWAGSMALYELAVFDPSDPVLDPMWRQGMFVIPFMTRLGITNSWGGWNITGGAITNPGIWSYEGVAGAHIVFSGLCFLAAIWHWVYWDLEIFCDERTGKPSLDLPKIFGIHLFLAGVACFGFGAFHVTGLYGPGIWVSDPYGLTGRIQSVNPAWGVEGFDPFVPGGVASHHIAAGTLGILAGLFHLSVRPPQRLYKGLRMGNIETVLSSSIAAVFFAAFVVAGTMWYGSATTPIELFGPTRYQWDQGYFQQEIYRRVGAGLAENQNLTEAWSKIPEKLAFYDYIGNNPAKGGLFRAGSMDNGDGIAVGWLGHPIFRDKEGHELFVRRMPTFFETFPVVLVDGDGIVRADVPFRRAESKYSVEQVGVTVEFYGGELNGISYSDPTTVKKYARRAQLGEIFELDRATLKSDGVFRSSPRGWFTFGHASFALLFFFGHIWHGARTLFRDVFAGIDPDLDAQVEFGAFQKLGDPTTRRQVV.

6 helical membrane-spanning segments follow: residues 21–36 (SVHI…WAGS), 101–115 (IVFS…IWHW), 140–156 (GIHL…FGAF), 203–218 (IAAG…FHLS), 237–252 (VLSS…AFVV), and 457–472 (SFAL…HGAR).

It belongs to the PsbB/PsbC family. PsbB subfamily. As to quaternary structure, PSII is composed of 1 copy each of membrane proteins PsbA, PsbB, PsbC, PsbD, PsbE, PsbF, PsbH, PsbI, PsbJ, PsbK, PsbL, PsbM, PsbT, PsbX, PsbY, PsbZ, Psb30/Ycf12, at least 3 peripheral proteins of the oxygen-evolving complex and a large number of cofactors. It forms dimeric complexes. Binds multiple chlorophylls. PSII binds additional chlorophylls, carotenoids and specific lipids. serves as cofactor.

It localises to the plastid. It is found in the chloroplast thylakoid membrane. Functionally, one of the components of the core complex of photosystem II (PSII). It binds chlorophyll and helps catalyze the primary light-induced photochemical processes of PSII. PSII is a light-driven water:plastoquinone oxidoreductase, using light energy to abstract electrons from H(2)O, generating O(2) and a proton gradient subsequently used for ATP formation. The chain is Photosystem II CP47 reaction center protein from Phaseolus vulgaris (Kidney bean).